A 507-amino-acid chain; its full sequence is Maturase K (507 aa).

It belongs to the intron maturase 2 family. MatK subfamily.

The protein localises to the plastid. It localises to the chloroplast. In terms of biological role, usually encoded in the trnK tRNA gene intron. Probably assists in splicing its own and other chloroplast group II introns. This is Maturase K from Umbellularia californica (California bay laurel).